A 318-amino-acid polypeptide reads, in one-letter code: Methionyl-tRNA formyltransferase (318 aa).

112-115 (SILP) is a binding site for (6S)-5,6,7,8-tetrahydrofolate.

The protein belongs to the Fmt family.

It carries out the reaction L-methionyl-tRNA(fMet) + (6R)-10-formyltetrahydrofolate = N-formyl-L-methionyl-tRNA(fMet) + (6S)-5,6,7,8-tetrahydrofolate + H(+). Functionally, attaches a formyl group to the free amino group of methionyl-tRNA(fMet). The formyl group appears to play a dual role in the initiator identity of N-formylmethionyl-tRNA by promoting its recognition by IF2 and preventing the misappropriation of this tRNA by the elongation apparatus. The polypeptide is Methionyl-tRNA formyltransferase (Shewanella baltica (strain OS185)).